The primary structure comprises 142 residues: Large ribosomal subunit protein uL13 (142 aa).

Belongs to the universal ribosomal protein uL13 family. As to quaternary structure, part of the 50S ribosomal subunit.

Its function is as follows. This protein is one of the early assembly proteins of the 50S ribosomal subunit, although it is not seen to bind rRNA by itself. It is important during the early stages of 50S assembly. The chain is Large ribosomal subunit protein uL13 from Vesicomyosocius okutanii subsp. Calyptogena okutanii (strain HA).